An 865-amino-acid polypeptide reads, in one-letter code: V-type proton ATPase 116 kDa subunit a 3 (865 aa).

Residues 1–409 lie on the Cytoplasmic side of the membrane; sequence MGSIYRSEHM…VNPAPWTIIS (409 aa). A coiled-coil region spans residues 51–121; that stretch reads FVNEVRRCDE…NKNCKVLKNN (71 aa). A helical membrane pass occupies residues 410–430; sequence FPFLFAVMFGDAGHGIIMLIA. Residues 431–453 are Extracellular-facing; that stretch reads ASAFVIFEKKLISMKIKDEIFNT. Residues 454-474 form a helical membrane-spanning segment; it reads FFGGRYVVLLMGMFAIYTGFI. Residues 475–556 lie on the Cytoplasmic side of the membrane; it reads YNDFYSKSVN…FLNPMKMKTS (82 aa). The chain crosses the membrane as a helical span at residues 557–577; sequence ILLGISQMAFGIMLSLMNHIG. N-linked (GlcNAc...) asparagine glycosylation occurs at asparagine 578. The Extracellular segment spans residues 578–583; it reads NRSVVD. A helical transmembrane segment spans residues 584–604; the sequence is IVFVFIPQCLFLGCIFVYLCL. Over 605 to 623 the chain is Cytoplasmic; the sequence is QVLMKWIFFYVKPAYIFGR. Residues 624-644 traverse the membrane as a helical segment; the sequence is LYPGSNCAPSLLIGLINMFMV. Topologically, residues 645–688 are extracellular; that stretch reads KSRDASFAHDVGTAAGKEWVIVNGQNVTYTINDQCYLQQWYPNQ. Asparagine 670 and asparagine 687 each carry an N-linked (GlcNAc...) asparagine glycan. A helical transmembrane segment spans residues 689–709; it reads SLVELILLLIAVVSVPVMLLV. Topologically, residues 710 to 798 are cytoplasmic; sequence KPFYIRWRHS…LTMGGWGGSA (89 aa). Residues 799-819 traverse the membrane as a helical segment; that stretch reads AITILFYFIFSILSVCILILM. The Extracellular portion of the chain corresponds to 820 to 865; sequence EGLSAFLHAIRLHWVEFQSKFYGGTGIQFEPFCFTKIIRVYEGLDQ.

It belongs to the V-ATPase 116 kDa subunit family. V-ATPase is a heteromultimeric enzyme made up of two complexes: the ATP-hydrolytic V1 complex and the proton translocation V0 complex. The V1 complex consists of three catalytic AB heterodimers that form a heterohexamer, three peripheral stalks each consisting of EG heterodimers, one central rotor including subunits D and F, and the regulatory subunits C and H. The proton translocation complex V0 consists of the proton transport subunit a, a ring of proteolipid subunits c9c'', rotary subunit d, subunits e and f, and the accessory subunits vah-19/Ac45 and vah-20/PRR. Interacts with V-type proton ATPase subunit C vha-11.

The protein resides in the apical cell membrane. Its function is as follows. Subunit of the V0 complex of vacuolar(H+)-ATPase (V-ATPase), a multisubunit enzyme composed of a peripheral complex (V1) that hydrolyzes ATP and a membrane integral complex (V0) that translocates protons. V-ATPase is responsible for acidifying and maintaining the pH of intracellular compartments and in some cell types, is targeted to the plasma membrane, where it is responsible for acidifying the extracellular environment. In the intestine, required for the rhythmic defecation behavior by promoting acidification in the gut lumen following defecation. Also, luminal acidification is required for nutrient uptake. This chain is V-type proton ATPase 116 kDa subunit a 3, found in Caenorhabditis elegans.